The chain runs to 302 residues: Sulfate adenylyltransferase subunit 2 (302 aa).

A disordered region spans residues 280 to 302 (RQGRAIDHDQSGSMELKKRQGYF).

This sequence belongs to the PAPS reductase family. CysD subfamily. In terms of assembly, heterodimer composed of CysD, the smaller subunit, and CysN.

It carries out the reaction sulfate + ATP + H(+) = adenosine 5'-phosphosulfate + diphosphate. It participates in sulfur metabolism; hydrogen sulfide biosynthesis; sulfite from sulfate: step 1/3. Functionally, with CysN forms the ATP sulfurylase (ATPS) that catalyzes the adenylation of sulfate producing adenosine 5'-phosphosulfate (APS) and diphosphate, the first enzymatic step in sulfur assimilation pathway. APS synthesis involves the formation of a high-energy phosphoric-sulfuric acid anhydride bond driven by GTP hydrolysis by CysN coupled to ATP hydrolysis by CysD. This chain is Sulfate adenylyltransferase subunit 2, found in Vibrio parahaemolyticus serotype O3:K6 (strain RIMD 2210633).